Reading from the N-terminus, the 328-residue chain is Dof zinc finger protein PBF (328 aa).

The interval 33–56 (RDPKQTRAMPQIGGSGERKPRPQL) is disordered. A Dof-type zinc finger spans residues 60–114 (LKCPRCDSNNTKFCYYNNYSMSQPRYFCKACRRYWTHGGTLRNVPIGGGCRKNKH). Residues C62, C65, C87, and C90 each coordinate Zn(2+). Disordered regions lie at residues 124–144 (TSSSSSATYAPLSPSTNASSS) and 306–328 (WNKHNNNNNNNNNNNNNNNNKGQ).

Interacts with the bZIP transcription factor Opaque-2/O2. Seed endosperm.

The protein resides in the nucleus. In terms of biological role, transcription factor that binds specifically to a 5'-AA[AG]G-3' consensus core sequence. May enhance the DNA binding of the bZIP transcription factor Opaque-2 to O2 binding site elements. This chain is Dof zinc finger protein PBF (PBF), found in Zea mays (Maize).